Here is a 1047-residue protein sequence, read N- to C-terminus: Cation efflux system protein CusA (1047 aa).

12 helical membrane-spanning segments follow: residues 14 to 34 (FLVL…IINT), 338 to 358 (LSGK…LFLW), 363 to 383 (ALVA…VMHF), 391 to 411 (MSLG…IVMI), 446 to 466 (VGPA…PIFT), 485 to 505 (AMAG…GYWI), 532 to 552 (VLHW…TVLW), 871 to 891 (KLKL…YLAF), 898 to 918 (LLII…LWWM), 928 to 948 (TGFI…LMYL), 985 to 1005 (AMTV…TGAG), and 1012 to 1032 (IAAP…FIIP).

This sequence belongs to the resistance-nodulation-cell division (RND) (TC 2.A.6) family. In terms of assembly, the cus efflux system is composed of CusA, CusB, CusC and CusF.

It is found in the cell inner membrane. Its function is as follows. Part of a cation efflux system that mediates resistance to copper and silver. The sequence is that of Cation efflux system protein CusA (cusA) from Escherichia coli (strain K12).